We begin with the raw amino-acid sequence, 242 residues long: 1-(5-phosphoribosyl)-5-[(5-phosphoribosylamino)methylideneamino] imidazole-4-carboxamide isomerase (242 aa).

Asp-8 functions as the Proton acceptor in the catalytic mechanism. Asp-130 (proton donor) is an active-site residue.

This sequence belongs to the HisA/HisF family.

It is found in the cytoplasm. The enzyme catalyses 1-(5-phospho-beta-D-ribosyl)-5-[(5-phospho-beta-D-ribosylamino)methylideneamino]imidazole-4-carboxamide = 5-[(5-phospho-1-deoxy-D-ribulos-1-ylimino)methylamino]-1-(5-phospho-beta-D-ribosyl)imidazole-4-carboxamide. It functions in the pathway amino-acid biosynthesis; L-histidine biosynthesis; L-histidine from 5-phospho-alpha-D-ribose 1-diphosphate: step 4/9. The sequence is that of 1-(5-phosphoribosyl)-5-[(5-phosphoribosylamino)methylideneamino] imidazole-4-carboxamide isomerase from Thioalkalivibrio sulfidiphilus (strain HL-EbGR7).